Consider the following 666-residue polypeptide: ATP-dependent zinc metalloprotease FtsH (666 aa).

At 1-6 (MKSETG) the chain is on the cytoplasmic side. A helical membrane pass occupies residues 7–27 (YMGFVVVLVFMVLLALQLATL). Over 28-116 (SAPATQIAYS…TRYRGADDDT (89 aa)) the chain is Periplasmic. The chain crosses the membrane as a helical span at residues 117-137 (WIGTLASWIVPIAVFALVWNL). Topologically, residues 138 to 666 (MLRRPRGGLQ…ADNADHSVPQ (529 aa)) are cytoplasmic. 210–217 (GAPGTGKT) lines the ATP pocket. H432 is a binding site for Zn(2+). E433 is a catalytic residue. Zn(2+) contacts are provided by H436 and D509. The disordered stretch occupies residues 612 to 666 (NDEPTPEPGARDPGGDAAKRSGIGAAPAKPPAEVGSAELRDPARKADNADHSVPQ). Basic and acidic residues-rich tracts occupy residues 620-630 (GARDPGGDAAK) and 649-666 (ELRD…SVPQ).

In the central section; belongs to the AAA ATPase family. The protein in the C-terminal section; belongs to the peptidase M41 family. As to quaternary structure, homohexamer. Zn(2+) serves as cofactor.

The protein resides in the cell inner membrane. Its function is as follows. Acts as a processive, ATP-dependent zinc metallopeptidase for both cytoplasmic and membrane proteins. Plays a role in the quality control of integral membrane proteins. In Burkholderia pseudomallei (strain 1710b), this protein is ATP-dependent zinc metalloprotease FtsH.